We begin with the raw amino-acid sequence, 1462 residues long: Tyrosine-protein phosphatase 69D (1462 aa).

The N-terminal stretch at 1–28 (MALLYRRMSMLLNIILAYIFLCAICVQG) is a signal peptide. Ig-like C2-type domains are found at residues 29–125 (SVKQ…TEFQ) and 131–230 (PSKV…KEIT). Topologically, residues 29 to 805 (SVKQEWAEIG…MDYYLSIGVK (777 aa)) are extracellular. Asn40, Asn58, Asn64, Asn85, Asn109, Asn119, Asn162, Asn191, Asn196, Asn209, Asn255, Asn288, Asn302, Asn429, Asn442, Asn451, Asn516, Asn613, Asn701, and Asn755 each carry an N-linked (GlcNAc...) asparagine glycan. Cys45 and Cys112 are disulfide-bonded. Cys154 and Cys214 are joined by a disulfide. Fibronectin type-III domains follow at residues 237 to 332 (PQVS…TLSY), 334 to 435 (PIFI…TMDG), and 439 to 547 (KPTN…TPDA). The chain crosses the membrane as a helical span at residues 806–823 (AGAVLLGVILVFIVLWVF). At 824 to 1462 (HHKKTKNELQ…LHHIAESTLD (639 aa)) the chain is on the cytoplasmic side. Tyrosine-protein phosphatase domains are found at residues 893–1156 (FLRE…LLDT) and 1187–1450 (LEVE…IINY). Active-site phosphocysteine intermediate residues include Cys1097 and Cys1391.

This sequence belongs to the protein-tyrosine phosphatase family. Receptor class subfamily.

The protein resides in the membrane. The catalysed reaction is O-phospho-L-tyrosyl-[protein] + H2O = L-tyrosyl-[protein] + phosphate. Its function is as follows. Possible cell adhesion receptor. The polypeptide is Tyrosine-protein phosphatase 69D (Ptp69D) (Drosophila melanogaster (Fruit fly)).